The primary structure comprises 237 residues: Sugar fermentation stimulation protein homolog (237 aa).

Belongs to the SfsA family.

The chain is Sugar fermentation stimulation protein homolog from Methylobacterium radiotolerans (strain ATCC 27329 / DSM 1819 / JCM 2831 / NBRC 15690 / NCIMB 10815 / 0-1).